We begin with the raw amino-acid sequence, 750 residues long: Sulfhydryl oxidase 1 (750 aa).

Residues 1-32 (MGRCNRGSGPPSSLLLLLLLLLWLLAVPGASA) form the signal peptide. The Thioredoxin domain maps to 39-159 (YSPSDPLTLL…RERLIDALES (121 aa)). Residues C73 and C76 each act as nucleophile in the active site. 2 disulfides stabilise this stretch: C73–C76 and C104–C113. Residues N133 and N246 are each glycosylated (N-linked (GlcNAc...) asparagine). The cysteines at positions 396 and 408 are disulfide-linked. Residues 399 to 506 (SEPHFRGFPC…EDPQFPKVQW (108 aa)) form the ERV/ALR sulfhydryl oxidase domain. FAD-binding residues include R404, W411, and H415. Position 429 is a phosphoserine (S429). Cysteines 452 and 455 form a disulfide. Residues D454, H458, 481–488 (WSSHNRVN), K503, and W506 each bind FAD. C512 and C515 are joined by a disulfide. N578 carries an N-linked (GlcNAc...) asparagine glycan. Positions 578-645 (NSTVDLGKPE…REQPRGQWHL (68 aa)) are disordered. Over residues 624-639 (PPEHMAELQTNEREQP) the composition is skewed to basic and acidic residues. Residues 713–733 (ISLCVGLYSLSFMGLLAMYAY) form a helical membrane-spanning segment.

Belongs to the quiescin-sulfhydryl oxidase (QSOX) family. As to quaternary structure, monomer. FAD is required as a cofactor. Post-translationally, N-glycosylated. O-glycosylated on Thr and Ser residues.

Its subcellular location is the golgi apparatus membrane. The protein resides in the secreted. The enzyme catalyses 2 R'C(R)SH + O2 = R'C(R)S-S(R)CR' + H2O2. Its function is as follows. Catalyzes the oxidation of sulfhydryl groups in peptide and protein thiols to disulfides with the reduction of oxygen to hydrogen peroxide. Plays a role in disulfide bond formation in a variety of extracellular proteins. In fibroblasts, required for normal incorporation of laminin into the extracellular matrix, and thereby for normal cell-cell adhesion and cell migration. This is Sulfhydryl oxidase 1 (QSOX1) from Pongo abelii (Sumatran orangutan).